The primary structure comprises 873 residues: MRFGWLEVAALTAASVANAQVFDNSHGNNQELAFSPPFYPSPWADGQGEWADAHRRAVEIVSQMTLAEKVNLTTGTGWEMDRCVGQTGSVPRLGINWGLCGQDSPLGIRFSDLNSAFPAGTNVAATWDKTLAYLRGKAMGEEFNDKGVDILLGPAAGPLGKYPDGGRIWEGFSPDPALTGVLFAETIKGIQDAGVIATAKHYILNEQEHFRQVGEAQGYGYNITETISSNVDDKTMHELYLWPFADAVRAGVGAVMCSYNQINNSYGCQNSQTLNKLLKAELGFQGFVMSDWSAHHSGVGAALAGLDMSMPGDISFDDGLSFWGTNLTVSVLNGTVPAWRVDDMAVRIMTAYYKVGRDRLRIPPNFSSWTRDEYGWEHSAVSEGAWTKVNDFVNVQRSHSQIIREIGAASTVLLKNTGALPLTGKEVKVGVLGEDAGSNPWGANGCPDRGCDNGTLAMAWGSGTANFPYLVTPEQAIQREVISNGGNVFAVTDNGALSQMADVASQSSVSLVFVNADSGEGFISVDGNEGDRKNLTLWKNGEAVIDTVVSHCNNTIVVIHSVGPVLIDRWYDNPNVTAIIWAGLPGQESGNSLVDVLYGRVNPSAKTPFTWGKTRESYGAPLLTEPNNGNGAPQDDFNEGVFIDYRHFDKRNETPIYEFGHGLSYTTFGYSHLRVQALNSSSSAYVPTSGETKPAPTYGEIGSAADYLYPEGLKRITKFIYPWLNSTDLEDSSDDPNYGWEDSEYIPEGARDGSPQPLLKAGGAPGGNPTLYQDLVRVSATITNTGNVAGYEVPQLYVSLGGPNEPRVVLRKFDRIFLAPGEQKVWTTTLNRRDLANWDVEAQDWVITKYPKKVHVGSSSRKLPLRAPLPRVY.

Positions 1–19 (MRFGWLEVAALTAASVANA) are cleaved as a signal peptide. Residues Asn-71, Asn-222, and Asn-263 are each glycosylated (N-linked (GlcNAc...) asparagine). Asp-291 is an active-site residue. Residues Asn-326, Asn-333, Asn-365, Asn-453, Asn-534, Asn-553, Asn-575, Asn-679, and Asn-725 are each glycosylated (N-linked (GlcNAc...) asparagine). Positions 731–764 (DSSDDPNYGWEDSEYIPEGARDGSPQPLLKAGGA) are disordered.

The protein belongs to the glycosyl hydrolase 3 family.

Its subcellular location is the secreted. The enzyme catalyses Hydrolysis of terminal, non-reducing beta-D-glucosyl residues with release of beta-D-glucose.. It participates in glycan metabolism; cellulose degradation. Functionally, beta-glucosidases are one of a number of cellulolytic enzymes involved in the degradation of cellulosic biomass. Catalyzes the last step releasing glucose from the inhibitory cellobiose. This chain is Probable beta-glucosidase A (bglA), found in Aspergillus fumigatus (strain CBS 144.89 / FGSC A1163 / CEA10) (Neosartorya fumigata).